Here is a 306-residue protein sequence, read N- to C-terminus: Homoserine kinase (306 aa).

95–105 (PQSRGLGSSAA) lines the ATP pocket.

It belongs to the GHMP kinase family. Homoserine kinase subfamily.

Its subcellular location is the cytoplasm. It catalyses the reaction L-homoserine + ATP = O-phospho-L-homoserine + ADP + H(+). Its pathway is amino-acid biosynthesis; L-threonine biosynthesis; L-threonine from L-aspartate: step 4/5. Its function is as follows. Catalyzes the ATP-dependent phosphorylation of L-homoserine to L-homoserine phosphate. This Corynebacterium urealyticum (strain ATCC 43042 / DSM 7109) protein is Homoserine kinase.